The primary structure comprises 300 residues: Nucleotide-binding protein TM1040_2438 (300 aa).

ATP is bound at residue 24-31; the sequence is GPSGAGRT. Residue 71 to 74 coordinates GTP; it reads DPRN.

The protein belongs to the RapZ-like family.

In terms of biological role, displays ATPase and GTPase activities. The polypeptide is Nucleotide-binding protein TM1040_2438 (Ruegeria sp. (strain TM1040) (Silicibacter sp.)).